Here is a 366-residue protein sequence, read N- to C-terminus: Molybdenum import ATP-binding protein ModC (366 aa).

The ABC transporter domain maps to 1–231 (MSEVILQLQK…KAMRPWQSFS (231 aa)). An ATP-binding site is contributed by 33–40 (GRSGAGKT). In terms of domain architecture, Mop spans 292–361 (ASSIRNILPA…IKGVSVAQRD (70 aa)).

It belongs to the ABC transporter superfamily. Molybdate importer (TC 3.A.1.8) family. As to quaternary structure, the complex is composed of two ATP-binding proteins (ModC), two transmembrane proteins (ModB) and a solute-binding protein (ModA).

The protein resides in the cell inner membrane. It carries out the reaction molybdate(out) + ATP + H2O = molybdate(in) + ADP + phosphate + H(+). In terms of biological role, part of the ABC transporter complex ModABC involved in molybdenum import. Responsible for energy coupling to the transport system. The protein is Molybdenum import ATP-binding protein ModC of Vibrio cholerae serotype O1 (strain ATCC 39315 / El Tor Inaba N16961).